Reading from the N-terminus, the 219-residue chain is MILPSLLVASLSALAAAGPVPPSALEARQSESASDLENGICKPVVLIFARGSTESGNMGYIAGMPTCNALKTKLGSDQVACQGVGGAYTAGLIPNFLPNNTDQASIDEATKMFDLAHTQCPDAQIVAGGYSQGTAVMDGSIQALPDDIKSTVKGVVLFGFTRNLQDNGQIPNYPKDQTKVICAPGDLVCDGTLIITPAHLTYALYAGEAAEFLASKVSA.

Positions 1-17 are cleaved as a signal peptide; it reads MILPSLLVASLSALAAA. Intrachain disulfides connect C41–C120 and C67–C81. An N-linked (GlcNAc...) asparagine glycan is attached at N99. S131 functions as the Nucleophile in the catalytic mechanism. A disulfide bridge links C182 with C189. The active site involves D186. H199 serves as the catalytic Proton donor/acceptor.

Belongs to the cutinase family.

Its subcellular location is the secreted. The enzyme catalyses cutin + H2O = cutin monomers.. Functionally, catalyzes the hydrolysis of complex carboxylic polyesters found in the cell wall of plants. Degrades cutin, a macromolecule that forms the structure of the plant cuticle. This Aspergillus terreus (strain NIH 2624 / FGSC A1156) protein is Probable cutinase 4.